The primary structure comprises 348 residues: Noscapine synthase SDR1 (348 aa).

Belongs to the NAD(P)-dependent epimerase/dehydratase family.

The catalysed reaction is narcotine hemiacetal + NAD(+) = noscapine + NADH + H(+). Its pathway is alkaloid biosynthesis. Oxidoreductase that catalyzes the last step in the biosynthesis of the benzylisoquinoline alkaloid noscapine. Converts narcotine hemiacetal to noscapine. The protein is Noscapine synthase SDR1 of Papaver somniferum (Opium poppy).